The primary structure comprises 216 residues: Inner membrane assembly complex subunit 22 (216 aa).

A mitochondrion-targeting transit peptide spans 1-26; the sequence is MFMARQVLRNGLFLRSLAPIKITART. Residues 27 to 43 are Mitochondrial matrix-facing; it reads VASANAGIKRKSRFDKT. A helical membrane pass occupies residues 44 to 63; that stretch reads MIKPLLLVMIFGSILNAVIA. Positions 64-93 form a coiled coil; it reads EKRNIIDMERKYKLKLDKLKELIRRVHDNN. Topologically, residues 64–216 are mitochondrial intermembrane; sequence EKRNIIDMER…KEHDKIPKFL (153 aa).

As to quaternary structure, component of the inner membrane assembly (INA) complex, composed of INA17 and INA22. Interacts with a subset of F(1)F(0)-ATP synthase subunits of the F(1)-domain and the peripheral stalk.

The protein localises to the mitochondrion inner membrane. Its function is as follows. Component of the INA complex (INAC) that promotes the biogenesis of mitochondrial F(1)F(0)-ATP synthase. INAC facilitates the assembly of the peripheral stalk and promotes the assembly of the catalytic F(1)-domain with the membrane-embedded F(0)-domain. This chain is Inner membrane assembly complex subunit 22, found in Saccharomyces cerevisiae (strain ATCC 204508 / S288c) (Baker's yeast).